Here is a 1142-residue protein sequence, read N- to C-terminus: MSQDIQTQNSYSDELYSSQIYSTQQPQQPQQQPQQQQSTFSSQQSQSSSYDFIYSTPQIHSQNSQNSQFSQNPLYDDFIHSTQNSYSQRVSSQRSYSQKSSSSQISFSQIPSSQIQSSQIPSSQIHSSQIPSSQNQSSQKSQFSFSQIPSSQIPSSQKRFFQSQNDDFVPSSQVTSLQDICLPQPIQQQQQQQQQQQQQQQQQQQQQQQQQQQQQQQQCQPQQQQTQQQQQQQQQQQQQQQQQQQQQQQQQQTQQQQQQPQEDDDDYDDYDGYDNYEDFVYNEGEEGEEDYEDYEQENDDDDDEDEDDDDDDDDDDDDEEEEEESQQQHIRSRALQSRSSQSRPLLRSGFKSPISRLSQTKTSPEYIYISSQSNTHTNQLGQSSQQTNSPNVHFNSLQQKKKQQQQQQQQQQQQQQQQQQQQQQQQQQQSQQIIGSQSSQSSQLPPTQPPVEVPVNLGRLIPINASHIPINLNLKREDRIVVGRSSSCDARLIDNYLTISGKHCEIYRADNLTCLKHIPLCKDKTDCHKNFGMLIVHDISSNGSYINGELIGNGKTRILRSDDILSLGHPSGDLKFIFESEFQFNFILDIKDNVNNLNENLDYKKLRTAYDNARIENKNCALRDYYFVKEIGSGGYGIVYEGLYKLNGKRVAIKHIDLLKNGSTSKSMELVSKEYNALKNIKHRNVIEFFDIVFSSTDCFFIVELATNDLSNLLRKRCVDEDDIKRICKQLLLGFNYLHNLGIVHRDLKPENILYNEFKQGFSIKITDFGLSSFVEESQYLQTFCGTPLFFAPEVIANNFFSNGYGKSCDLWSIGVTLYLSLCKYKPFIVDCRDLYHSFINGNLGFTSKKWAKISNYAKDLVRRLLVIDPEHRITIKEALNHPWFTQDRRFFKKYPKHYKSRAQPKTQFFVECFNVYYDLKSETGFICFREHFDNLETNYALFKQNFDNNNNNNNNNNNNNNNNNNNNNNNNNINNNNNNINNNNINNNNNNNNNNNNNTNTNNINNNNNNYNNSHNHNNNNHNHNHNLNNHNHNNNHHHNHNHNHNHNHNHNHNHNHNHNHNHNHNNHNNNNNNNNNNNNNNNNNNNNNNNNNNNNNNNNNNNNNNNNYYNNNINNINNNINNNINNNNNYHQQYTQHTTM.

Residues 1 to 16 (MSQDIQTQNSYSDELY) are compositionally biased toward polar residues. 3 disordered regions span residues 1–359 (MSQD…RLSQ), 374–404 (NTHTNQLGQSSQQTNSPNVHFNSLQQKKKQQ), and 432–451 (QIIGSQSSQSSQLPPTQPPV). Composition is skewed to low complexity over residues 17–72 (SSQI…FSQN) and 83–157 (QNSY…PSSQ). Positions 158 to 178 (KRFFQSQNDDFVPSSQVTSLQ) are enriched in polar residues. Positions 186–302 (IQQQQQQQQQ…DYEQENDDDD (117 aa)) form a coiled coil. Positions 187 to 260 (QQQQQQQQQQ…QQTQQQQQQP (74 aa)) are enriched in low complexity. Acidic residues-rich tracts occupy residues 261–277 (QEDDDDYDDYDGYDNYE) and 283–325 (EGEE…EEES). Low complexity predominate over residues 333-348 (RALQSRSSQSRPLLRS). The segment covering 374–397 (NTHTNQLGQSSQQTNSPNVHFNSL) has biased composition (polar residues). Positions 393 to 434 (HFNSLQQKKKQQQQQQQQQQQQQQQQQQQQQQQQQQQSQQII) form a coiled coil. A compositionally biased stretch (low complexity) spans 432 to 443 (QIIGSQSSQSSQ). In terms of domain architecture, FHA spans 480–551 (IVVGRSSSCD…NGSYINGELI (72 aa)). The Protein kinase domain maps to 625 to 885 (YYFVKEIGSG…IKEALNHPWF (261 aa)). Residues 631-639 (IGSGGYGIV) and Lys-654 each bind ATP. Asp-747 (proton acceptor) is an active-site residue. Positions 947-1142 (FDNNNNNNNN…HQQYTQHTTM (196 aa)) are disordered. The span at 949–1034 (NNNNNNNNNN…HNHNLNNHNH (86 aa)) shows a compositional bias: low complexity. A compositionally biased stretch (basic residues) spans 1035–1067 (NNNHHHNHNHNHNHNHNHNHNHNHNHNHNHNHN). The segment covering 1068 to 1133 (NHNNNNNNNN…NNINNNNNYH (66 aa)) has biased composition (low complexity). A coiled-coil region spans residues 1090-1132 (NNNNNNNNNNNNNNNNNNNNYYNNNINNINNNINNNINNNNNY).

This sequence belongs to the protein kinase superfamily. CAMK Ser/Thr protein kinase family. CHK2 subfamily.

It catalyses the reaction L-seryl-[protein] + ATP = O-phospho-L-seryl-[protein] + ADP + H(+). It carries out the reaction L-threonyl-[protein] + ATP = O-phospho-L-threonyl-[protein] + ADP + H(+). The chain is Probable serine/threonine-protein kinase fhkB (fhkB) from Dictyostelium discoideum (Social amoeba).